A 199-amino-acid chain; its full sequence is Probable GTP-binding protein EngB (199 aa).

The 175-residue stretch at 25 to 199 (IGMEVAFVGY…LKRVLNNWLR (175 aa)) folds into the EngB-type G domain. Positions 40 and 62 each coordinate Mg(2+).

It belongs to the TRAFAC class TrmE-Era-EngA-EngB-Septin-like GTPase superfamily. EngB GTPase family. The cofactor is Mg(2+).

In terms of biological role, necessary for normal cell division and for the maintenance of normal septation. The polypeptide is Probable GTP-binding protein EngB (Blochmanniella pennsylvanica (strain BPEN)).